The chain runs to 278 residues: Glutamate racemase (278 aa).

Substrate is bound by residues 25-26 and 57-58; these read DS and YG. The active-site Proton donor/acceptor is the cysteine 89. 90–91 provides a ligand contact to substrate; the sequence is NT. The active-site Proton donor/acceptor is cysteine 204. Position 205-206 (205-206) interacts with substrate; it reads TH.

This sequence belongs to the aspartate/glutamate racemases family.

It carries out the reaction L-glutamate = D-glutamate. Its pathway is cell wall biogenesis; peptidoglycan biosynthesis. Provides the (R)-glutamate required for cell wall biosynthesis. This Brucella anthropi (strain ATCC 49188 / DSM 6882 / CCUG 24695 / JCM 21032 / LMG 3331 / NBRC 15819 / NCTC 12168 / Alc 37) (Ochrobactrum anthropi) protein is Glutamate racemase.